Here is a 407-residue protein sequence, read N- to C-terminus: Peptidase T (407 aa).

His-82 lines the Zn(2+) pocket. Asp-84 is an active-site residue. Residue Asp-143 participates in Zn(2+) binding. The active-site Proton acceptor is Glu-177. Residues Glu-178, Asp-200, and His-382 each contribute to the Zn(2+) site.

It belongs to the peptidase M20B family. Zn(2+) is required as a cofactor.

It localises to the cytoplasm. It catalyses the reaction Release of the N-terminal residue from a tripeptide.. Cleaves the N-terminal amino acid of tripeptides. In Streptococcus pyogenes serotype M4 (strain MGAS10750), this protein is Peptidase T.